Consider the following 175-residue polypeptide: ATP-dependent protease subunit HslV (175 aa).

The active site involves T2. A156, C159, and T162 together coordinate Na(+).

The protein belongs to the peptidase T1B family. HslV subfamily. As to quaternary structure, a double ring-shaped homohexamer of HslV is capped on each side by a ring-shaped HslU homohexamer. The assembly of the HslU/HslV complex is dependent on binding of ATP.

The protein resides in the cytoplasm. The catalysed reaction is ATP-dependent cleavage of peptide bonds with broad specificity.. Its activity is regulated as follows. Allosterically activated by HslU binding. Protease subunit of a proteasome-like degradation complex believed to be a general protein degrading machinery. The polypeptide is ATP-dependent protease subunit HslV (Rhizobium etli (strain CIAT 652)).